The sequence spans 92 residues: MARSVWKGPFVDGYLLKKAEKVREGGRNEVIKMWSRRSTILPQFVGLTFGVYNGSKHVPVSVSEEMVGHKFGEFAPTRTYYGHGADKKAKRK.

It belongs to the universal ribosomal protein uS19 family.

Functionally, protein S19 forms a complex with S13 that binds strongly to the 16S ribosomal RNA. This is Small ribosomal subunit protein uS19 from Brucella ovis (strain ATCC 25840 / 63/290 / NCTC 10512).